We begin with the raw amino-acid sequence, 40 residues long: ANVLWLQGGAXSGNTMSFLNAEEPSAXDLVTDFGINVLXQ.

The cofactor is Fe cation.

It catalyses the reaction 2 Fe(III)-[cytochrome c3] + H2 = 2 Fe(II)-[cytochrome c3] + 2 H(+). This is Cytochrome c3 hydrogenase small chain (hoxK) from Acidithiobacillus ferrooxidans (Thiobacillus ferrooxidans).